The sequence spans 475 residues: ATP synthase subunit beta, chloroplastic (475 aa).

Residue 155–162 (GGAGVGKT) coordinates ATP.

Belongs to the ATPase alpha/beta chains family. As to quaternary structure, F-type ATPases have 2 components, CF(1) - the catalytic core - and CF(0) - the membrane proton channel. CF(1) has five subunits: alpha(3), beta(3), gamma(1), delta(1), epsilon(1). CF(0) has four main subunits: a(1), b(1), b'(1) and c(9-12).

The protein resides in the plastid. Its subcellular location is the chloroplast thylakoid membrane. The catalysed reaction is ATP + H2O + 4 H(+)(in) = ADP + phosphate + 5 H(+)(out). In terms of biological role, produces ATP from ADP in the presence of a proton gradient across the membrane. The catalytic sites are hosted primarily by the beta subunits. This chain is ATP synthase subunit beta, chloroplastic, found in Ochrosphaera neapolitana.